A 497-amino-acid polypeptide reads, in one-letter code: mRNA cleavage and polyadenylation factor CLP1 (497 aa).

The disordered stretch occupies residues 1-20 (MSIPGLGQIAPQQPTTSTTR). Residues Glu29 and 168-173 (DSGKTT) each bind ATP.

Belongs to the Clp1 family. Clp1 subfamily. Component of a pre-mRNA cleavage factor complex. Interacts directly with PCF11.

Its subcellular location is the nucleus. Functionally, required for endonucleolytic cleavage during polyadenylation-dependent pre-mRNA 3'-end formation. The chain is mRNA cleavage and polyadenylation factor CLP1 from Chaetomium globosum (strain ATCC 6205 / CBS 148.51 / DSM 1962 / NBRC 6347 / NRRL 1970) (Soil fungus).